The following is a 216-amino-acid chain: Small ribosomal subunit protein uS3c (216 aa).

A KH type-2 domain is found at 43–118 (IKNYIQKNRR…RLKIAITRVE (76 aa)).

Belongs to the universal ribosomal protein uS3 family. Part of the 30S ribosomal subunit.

The protein resides in the plastid. It is found in the chloroplast. This chain is Small ribosomal subunit protein uS3c (rps3), found in Dioscorea elephantipes (Elephant's foot yam).